We begin with the raw amino-acid sequence, 180 residues long: Ribulose bisphosphate carboxylase small subunit, chloroplastic (180 aa).

Residues 1–56 (MASSVLSSAAVATRSNVAQANMVAPFTGLKSAASFPVSRKQNLDITSIASNGGRVQ) constitute a chloroplast transit peptide.

It belongs to the RuBisCO small chain family. As to quaternary structure, heterohexadecamer of 8 large and 8 small subunits.

It is found in the plastid. The protein resides in the chloroplast. Functionally, ruBisCO catalyzes two reactions: the carboxylation of D-ribulose 1,5-bisphosphate, the primary event in carbon dioxide fixation, as well as the oxidative fragmentation of the pentose substrate. Both reactions occur simultaneously and in competition at the same active site. Although the small subunit is not catalytic it is essential for maximal activity. The sequence is that of Ribulose bisphosphate carboxylase small subunit, chloroplastic from Nicotiana plumbaginifolia (Leadwort-leaved tobacco).